Reading from the N-terminus, the 635-residue chain is Threonine--tRNA ligase (635 aa).

The 61-residue stretch at 1–61 (MIAITLPDGS…DRDAELAIVT (61 aa)) folds into the TGS domain. Residues 242-533 (DHRKLGKTLD…LLENHAGALP (292 aa)) form a catalytic region. Positions 333, 384, and 510 each coordinate Zn(2+).

It belongs to the class-II aminoacyl-tRNA synthetase family. As to quaternary structure, homodimer. It depends on Zn(2+) as a cofactor.

It is found in the cytoplasm. It carries out the reaction tRNA(Thr) + L-threonine + ATP = L-threonyl-tRNA(Thr) + AMP + diphosphate + H(+). Catalyzes the attachment of threonine to tRNA(Thr) in a two-step reaction: L-threonine is first activated by ATP to form Thr-AMP and then transferred to the acceptor end of tRNA(Thr). Also edits incorrectly charged L-seryl-tRNA(Thr). The protein is Threonine--tRNA ligase of Cupriavidus necator (strain ATCC 17699 / DSM 428 / KCTC 22496 / NCIMB 10442 / H16 / Stanier 337) (Ralstonia eutropha).